A 374-amino-acid chain; its full sequence is ORC1-type DNA replication protein 6 (374 aa).

ATP contacts are provided by residues 66–70 (TGKTT), Y209, and R221.

Belongs to the CDC6/cdc18 family.

Involved in regulation of DNA replication. In Halobacterium salinarum (strain ATCC 700922 / JCM 11081 / NRC-1) (Halobacterium halobium), this protein is ORC1-type DNA replication protein 6 (orc6).